The sequence spans 46 residues: Toxin Up-1 (46 aa).

The protein resides in the secreted. It is found in the nematocyst. Its subcellular location is the target cell membrane. Functionally, this toxin is a potent hemolysin devoid of enzymatic activity. Its hemolytic activity is inhibited by sphingomyelin but not by cholesterol. In erythrocyte membranes, it causes numerous cell membrane ruptures. It also exerces cytotoxicity to different cell lines. It exerces a positive inotropic effect. Also causes hemorrhage and necrosis by dilation of the blood vessels in the skin, and vascular leakage of fluids and rupture of alveolar walls of the lungs. Is a potent ichtyotoxin. May act as a pore-forming toxin. The protein is Toxin Up-1 of Urticina piscivora (Fish-eating sea anemone).